A 302-amino-acid polypeptide reads, in one-letter code: 33 kDa chaperonin (302 aa).

Intrachain disulfides connect cysteine 234-cysteine 236 and cysteine 267-cysteine 270.

The protein belongs to the HSP33 family. Post-translationally, under oxidizing conditions two disulfide bonds are formed involving the reactive cysteines. Under reducing conditions zinc is bound to the reactive cysteines and the protein is inactive.

It is found in the cytoplasm. Its function is as follows. Redox regulated molecular chaperone. Protects both thermally unfolding and oxidatively damaged proteins from irreversible aggregation. Plays an important role in the bacterial defense system toward oxidative stress. This Neisseria gonorrhoeae (strain ATCC 700825 / FA 1090) protein is 33 kDa chaperonin.